The primary structure comprises 166 residues: T-cell surface glycoprotein CD3 zeta chain (166 aa).

Positions 1 to 21 are cleaved as a signal peptide; that stretch reads MKWTALVIVAVLQTQFPVTAA. Topologically, residues 22 to 30 are extracellular; sequence QSFGLLDPK. A helical transmembrane segment spans residues 31–51; sequence LCYLLDGILFIYGVIVTALFL. Over 52–166 the chain is Cytoplasmic; that stretch reads RAKFSRSADA…ALHMQALPPR (115 aa). Residue serine 58 is modified to Phosphoserine. 3 consecutive ITAM domains span residues 61-89, 100-128, and 133-161; these read APAYQHGQNPVYNELNVGRREEYAVLDRR, PQRKKNPHEVVYNELRKDKMAEAYSEIGM, and QRRRGKGHDGVYQGLSTATKDTYDALHMQ. Phosphotyrosine is present on residues tyrosine 64, tyrosine 72, tyrosine 83, tyrosine 111, tyrosine 123, tyrosine 144, and tyrosine 155. The interval 126 to 156 is disordered; it reads IGMKSDNQRRRGKGHDGVYQGLSTATKDTYD.

This sequence belongs to the CD3Z/FCER1G family. In terms of assembly, the TCR-CD3 complex is composed of a CD3D/CD3E and a CD3G/CD3E heterodimers that preferentially associate with TCRalpha and TCRbeta, respectively, to form TCRalpha/CD3E/CD3G and TCRbeta/CD3G/CD3E trimers. In turn, the hexamer interacts with CD3Z homodimer to form the TCR-CD3 complex. Alternatively, TCRalpha and TCRbeta can be replaced by TCRgamma and TCRdelta. Interacts with SLA. Interacts with TRAT1. Interacts with DOCK2. Interacts with SLA2. Interacts with SHB. Interacts with ZAP70. Interacts (tyrosine phosphorylated) with SHC1 (via SH2 domain). Interacts with PTPRC. Interacts with CRK; this interaction regulates CD3Z phosphorylation. Interacts (on T cell side) with CD81, ICAM1 and CD9 at immunological synapses between antigen-presenting cells and T cells. Interacts with CD160. Interacts with LY6E. Interacts with LY6E. The signaling subunit of immunoglobulin gamma (IgG) Fc receptor complex. As a homodimer or a heterodimer with FCER1G, associates with the ligand binding subunit FCGR3A (via transmembrane domain); this interaction is a prerequisite for Fc receptor complex expression on the cell surface. Interacts with CD5. Phosphorylated on Tyr residues after T-cell receptor triggering by LCK in association with CD4/CD8.

It is found in the cell membrane. In terms of biological role, part of the TCR-CD3 complex present on T-lymphocyte cell surface that plays an essential role in adaptive immune response. When antigen presenting cells (APCs) activate T-cell receptor (TCR), TCR-mediated signals are transmitted across the cell membrane by the CD3 chains CD3D, CD3E, CD3G and CD3Z. All CD3 chains contain immunoreceptor tyrosine-based activation motifs (ITAMs) in their cytoplasmic domain. Upon TCR engagement, these motifs become phosphorylated by Src family protein tyrosine kinases LCK and FYN, resulting in the activation of downstream signaling pathways. CD3Z ITAMs phosphorylation creates multiple docking sites for the protein kinase ZAP70 leading to ZAP70 phosphorylation and its conversion into a catalytically active enzyme. Plays an important role in intrathymic T-cell differentiation. Additionally, participates in the activity-dependent synapse formation of retinal ganglion cells (RGCs) in both the retina and dorsal lateral geniculate nucleus (dLGN). This is T-cell surface glycoprotein CD3 zeta chain (CD247) from Ovis aries (Sheep).